The following is a 1379-amino-acid chain: MAERANLVFHNKVIDGTAIKRLISRLIDHFGMAYTSHILDQVKTLGFQQATATSISLGIDDLLTIPSKGWLVQDAEQQSWILEKHHHYGNVHAVEKLRQSIEIWYATSEYLRQEMNPNFRMTDPFNPVHMMSFSGARGNASQVHQLVGMRGLMSDPQGQMIDLPIQSNLREGLSLTEYIISCYGARKGVVDTAVRTSDAGYLTRRLVEVVQHIVVRRTDCGTIRGISVSPRNKNRMMSERIFIQTLIGRVLADDIYIGSRCVAFRNQDLGIGLVNRLITFGTQSISIRTPFTCRSTSWICRLCYGRSPTHGDLVELGEAVGIIAGQSIGEPGTQLTLRTFHTGGVFTGGTAEHVRAPYSGKIKFNEDLVHPTRTRHGHPAFLCYIDLSVIIESEDIIHSVTIPPKSFLLVQNDQYVESEQVIAEIREGTYTFHFKERVRKYIYSDSEGEMHWSTDVSHAPEFTYSNVHLLPKTSHLWILSGGSCGSSLIFFSIHKDQDQMNIPFLSVERKSISSLSVNNDQVSQKVLSSDFADQTKFGIPDYSEFKGNLGTSHYNFIYSAIFHENSDLLAKRRRNRFLIPFQSIQEQEKEFIPHSGISIEIPINGIFRRNSIFAFFDDPRYRRKSSGILKYGTPKADSIIQKADMIEYRGVQKFKTKYEMKVDRFFFIPEEVHILPESSAIMVQNYSIIGVDTRLALNIRSQVGGLIRVERKKKRIELKIFSGDIHFPDKTDKISRHSGILIPPGRGKKNSKESKKFQNWIYVQRITPTKKKFFVLVRPVATYEIADSINLATLFPQDLFREKDNIQLRVFNYILYGNSKPTQGISDTSIQLVRTCLVLNWDQDNKNSSLEEVRAFFVEVSTKGLIRDFIRIGLVKSHISYIRKRNNSRDSGLISADHMNPFYSISPKAGILQQSLRQNHGTIRMFLNRNKESQSLLILSSSNCFRMGPFNHLKYHNVINQSITKNPLITIKNSSGPLGTATQISNFYSFLPLLTYNKISLIKYLKLDNLKYIFQVINSYLIDENGKIFNLDPYSNVVLNPFKLNWYFLHQNYHHNYCEETSTIISLGQLFCENVCIAKKEPHLKSGQVLIVQRDSVVIRSAKPYLATPGAKVHGHYREILYEGDTLVTFIYEKSRSGDITQGLPKVEQVLEVRSIDSISLNLEKRIKGWNKCITRILGIPWGFLIGAELTIVQSRISLVNKIQKVYRSQGVQIHNRHIEIIVRQITSKVLVSEEGMSNVFLPGELIGLLRAERTGRALEESICYRAVLLGITRASLNTQSFISEASFQETARVLAKAALRGRIDWLKGLKENVVLGGVIPAGTGFNKGLVHCSRQHTNILLEKKTKNLSLFEGDMRDILFYHREFCDSAISKSAFSRI.

Residues cysteine 220, cysteine 293, cysteine 300, and cysteine 303 each coordinate Zn(2+).

Belongs to the RNA polymerase beta' chain family. RpoC2 subfamily. In plastids the minimal PEP RNA polymerase catalytic core is composed of four subunits: alpha, beta, beta', and beta''. When a (nuclear-encoded) sigma factor is associated with the core the holoenzyme is formed, which can initiate transcription. Zn(2+) serves as cofactor.

It is found in the plastid. The protein resides in the chloroplast. It catalyses the reaction RNA(n) + a ribonucleoside 5'-triphosphate = RNA(n+1) + diphosphate. Its function is as follows. DNA-dependent RNA polymerase catalyzes the transcription of DNA into RNA using the four ribonucleoside triphosphates as substrates. This chain is DNA-directed RNA polymerase subunit beta'', found in Olimarabidopsis pumila (Dwarf rocket).